The chain runs to 538 residues: Putative ABC1 protein At2g40090 (538 aa).

A signal peptide spans 1–26 (MAARSLWRTRTKLLVVGTALCGGSGA).

Belongs to the protein kinase superfamily. ADCK protein kinase family.

The polypeptide is Putative ABC1 protein At2g40090 (Arabidopsis thaliana (Mouse-ear cress)).